The following is a 502-amino-acid chain: L-ornithine N(5)-monooxygenase (502 aa).

Positions 1-10 (MEPVERKLEI) are enriched in basic and acidic residues. Residues 1-34 (MEPVERKLEIGSRSYSKMPLTQQRSSGEPPRLKA) form a disordered region. Over residues 13-26 (RSYSKMPLTQQRSS) the composition is skewed to polar residues. Residues 83 to 91 (ERQKQFAWH) and glutamine 102 contribute to the FAD site. Lysine 107 provides a ligand contact to substrate. An FAD-binding site is contributed by valine 168. NADP(+) contacts are provided by residues 254-257 (SGQS) and arginine 279. Residues 293 to 296 (NEVF) and asparagine 323 contribute to the substrate site. 323-325 (NYS) contributes to the NADP(+) binding site. 466–468 (SLL) is a binding site for FAD. Serine 469 lines the substrate pocket.

It belongs to the lysine N(6)-hydroxylase/L-ornithine N(5)-oxygenase family. As to quaternary structure, homotetramer. It depends on FAD as a cofactor.

It catalyses the reaction L-ornithine + NADPH + O2 = N(5)-hydroxy-L-ornithine + NADP(+) + H2O. The enzyme catalyses L-ornithine + NADH + O2 = N(5)-hydroxy-L-ornithine + NAD(+) + H2O. It functions in the pathway siderophore biosynthesis. In terms of biological role, catalyzes the conversion of L-ornithine to N(5)-hydroxyornithine, the first step in the biosynthesis of all hydroxamate-containing siderophores, such as deferriferrichrysin. The chain is L-ornithine N(5)-monooxygenase from Aspergillus oryzae (strain ATCC 42149 / RIB 40) (Yellow koji mold).